The chain runs to 289 residues: uncharacterized protein (289 aa).

Positions 25-66 are disordered; that stretch reads GGSGDSQSAHTPSTSIHTQNNSTPNKNTSTPPVNVSNANNLE. Residues 33–43 show a composition bias toward polar residues; that stretch reads AHTPSTSIHTQ. The span at 44-59 shows a compositional bias: low complexity; the sequence is NNSTPNKNTSTPPVNV.

This is an uncharacterized protein from Haemophilus influenzae (strain ATCC 51907 / DSM 11121 / KW20 / Rd).